The chain runs to 83 residues: Large ribosomal subunit protein eL43 (83 aa).

Positions 38, 41, 56, and 59 each coordinate Zn(2+). The C4-type zinc-finger motif lies at 38–59; that stretch reads CPVCGRRAVKRISTGIWQCTKC.

This sequence belongs to the eukaryotic ribosomal protein eL43 family. Putative zinc-binding subfamily. In terms of assembly, part of the 50S ribosomal subunit. Zn(2+) serves as cofactor.

In terms of biological role, binds to the 23S rRNA. This is Large ribosomal subunit protein eL43 from Pyrococcus horikoshii (strain ATCC 700860 / DSM 12428 / JCM 9974 / NBRC 100139 / OT-3).